The following is a 152-amino-acid chain: Prostaglandin E synthase (152 aa).

The Lumenal portion of the chain corresponds to 1-12; that stretch reads MPAHSLVMSSPA. Residues 13 to 41 form a helical membrane-spanning segment; sequence LPAFLLCSTLLVIKMYVVAIITGQVRLRK. Arg38 provides a ligand contact to glutathione. Over 42–60 the chain is Cytoplasmic; that stretch reads KAFANPEDALRHGGPQYCR. A helical transmembrane segment spans residues 61 to 90; sequence SDPDVERCLRAHRNDMETIYPFLFLGFVYS. A glutathione-binding site is contributed by 73 to 77; sequence RNDME. Topologically, residues 91-95 are lumenal; that stretch reads FLGPN. Residues 96 to 119 traverse the membrane as a helical segment; sequence PFVAWMHFLVFLVGRVAHTVAYLG. 2 residues coordinate glutathione: His113 and Tyr117. At 120–123 the chain is on the cytoplasmic side; the sequence is KLRA. A helical membrane pass occupies residues 124–152; sequence PIRSVTYTLAQLPCASMALQILWEAARHL. 126 to 130 is a glutathione binding site; it reads RSVTY.

Belongs to the MAPEG family. As to quaternary structure, homotrimer. Glutathione is required as a cofactor.

The protein localises to the membrane. Its subcellular location is the cytoplasm. It localises to the perinuclear region. The enzyme catalyses prostaglandin H2 = prostaglandin E2. It catalyses the reaction 2-glyceryl-prostaglandin H2 = 2-glyceryl-prostaglandin E2. It carries out the reaction prostaglandin G2 = (15S)-15-hydroperoxy-prostaglandin E2. The catalysed reaction is 1-chloro-2,4-dinitrobenzene + glutathione = 2,4-dinitrophenyl-S-glutathione + chloride + H(+). The enzyme catalyses (5S)-hydroperoxy-(6E,8Z,11Z,14Z)-eicosatetraenoate + 2 glutathione = (5S)-hydroxy-(6E,8Z,11Z,14Z)-eicosatetraenoate + glutathione disulfide + H2O. Its pathway is lipid metabolism; prostaglandin biosynthesis. With respect to regulation, induced by interleukin IL1B. Terminal enzyme of the cyclooxygenase (COX)-2-mediated prostaglandin E2 (PGE2) biosynthetic pathway. Catalyzes the glutathione-dependent oxidoreduction of prostaglandin endoperoxide H2 (PGH2) to prostaglandin E2 (PGE2) in response to inflammatory stimuli. Plays a key role in inflammation response, fever and pain. Also catalyzes the oxidoreduction of endocannabinoids into prostaglandin glycerol esters and PGG2 into 15-hydroperoxy-PGE2. In addition, displays low glutathione transferase and glutathione-dependent peroxidase activities, toward 1-chloro-2,4-dinitrobenzene and 5-hydroperoxyicosatetraenoic acid (5-HPETE), respectively. This is Prostaglandin E synthase (PTGES) from Homo sapiens (Human).